The following is a 383-amino-acid chain: Ceramide synthase 3 (383 aa).

Residues 32 to 52 form a helical membrane-spanning segment; sequence VFVKPSHLYVTIPYAFLLLII. The segment at 66–127 is homeobox-like; it reads KSFGIKETVR…RSRRNQERPS (62 aa). A TLC domain is found at 130-331; sequence KKFQEACWRF…ILKMLNRCIF (202 aa). 5 consecutive transmembrane segments (helical) span residues 139-159, 174-194, 205-225, 264-284, and 298-318; these read FAFY…KPWL, LLPS…SLLF, FLAH…SWCA, FFIF…FWIL, and FFSY…HLYW. At 319 to 383 the chain is on the cytoplasmic side; it reads GYYILKMLNR…HLIPNGQHGH (65 aa). Phosphoserine is present on Ser-340. Residues 342–355 show a composition bias toward acidic residues; that stretch reads DEDYEEEEEEEEEE. The tract at residues 342 to 363 is disordered; it reads DEDYEEEEEEEEEEATKGKEMD.

As to expression, expressed in the epidermis, where it localizes at the interface between the stratum granulosum and the stratum corneum (at protein level).

It is found in the endoplasmic reticulum membrane. The catalysed reaction is a very long-chain fatty acyl-CoA + a sphingoid base = an N-(very-long-chain fatty acyl)-sphingoid base + CoA + H(+). It catalyses the reaction docosanoyl-CoA + sphinganine = N-docosanoylsphinganine + CoA + H(+). It carries out the reaction tetracosanoyl-CoA + sphinganine = N-tetracosanoylsphinganine + CoA + H(+). The enzyme catalyses hexacosanoyl-CoA + sphinganine = N-hexacosanoylsphinganine + CoA + H(+). The catalysed reaction is 2-hydroxydocosanoyl-CoA + sphinganine = N-(2-hydroxydocosanoyl)-sphinganine + CoA + H(+). It catalyses the reaction 2-hydroxytetracosanoyl-CoA + sphinganine = N-(2-hydroxytetracosanoyl)-sphinganine + CoA + H(+). It carries out the reaction an ultra-long-chain fatty acyl-CoA + a sphingoid base = an N-(ultra-long-chain-acyl)-sphingoid base + CoA + H(+). The enzyme catalyses octacosanoyl-CoA + sphinganine = N-(octacosanoyl)-sphinganine + CoA + H(+). The catalysed reaction is a fatty acyl-CoA + sphing-4-enine = an N-acylsphing-4-enine + CoA + H(+). It catalyses the reaction sphinganine + octadecanoyl-CoA = N-(octadecanoyl)-sphinganine + CoA + H(+). It carries out the reaction 2-hydroxyoctadecanoyl-CoA + sphinganine = N-(2-hydroxyoctadecanoyl)-sphinganine + CoA + H(+). The protein operates within lipid metabolism; sphingolipid metabolism. Ceramide synthase that catalyzes the transfer of the acyl chain from acyl-CoA to a sphingoid base, with high selectivity toward very- and ultra-long-chain fatty acyl-CoA (chain length greater than C22). N-acylates sphinganine and sphingosine bases to form dihydroceramides and ceramides in de novo synthesis and salvage pathways, respectively. It is crucial for the synthesis of ultra-long-chain ceramides in the epidermis, to maintain epidermal lipid homeostasis and terminal differentiation. The polypeptide is Ceramide synthase 3 (Homo sapiens (Human)).